A 1503-amino-acid chain; its full sequence is EF-hand calcium-binding domain-containing protein 5 (1503 aa).

The segment at 1–23 (MNESASQEELRPAQENRKEDKER) is disordered. Over residues 8 to 23 (EELRPAQENRKEDKER) the composition is skewed to basic and acidic residues. Serine 77 is subject to Phosphoserine. Disordered stretches follow at residues 477–518 (ASKT…EQGP), 544–656 (IEPG…QGPY), and 730–750 (FPET…KSQK). Residues 549–561 (HTESTLEQGSSRR) show a composition bias toward polar residues. 2 stretches are compositionally biased toward basic and acidic residues: residues 562-582 (LLTE…HKGS) and 607-622 (GSRR…HKGS). In terms of domain architecture, EF-hand spans 869–904 (RQRLLLEAIFQKWDSDGSGFLDLKEVDELLYTYKEG). Ca(2+) contacts are provided by aspartate 882, aspartate 884, serine 886, and glutamate 893.

This chain is EF-hand calcium-binding domain-containing protein 5 (EFCAB5), found in Homo sapiens (Human).